The following is a 104-amino-acid chain: ATP-dependent Clp protease adapter protein ClpS (104 aa).

The protein belongs to the ClpS family. Binds to the N-terminal domain of the chaperone ClpA.

Involved in the modulation of the specificity of the ClpAP-mediated ATP-dependent protein degradation. This chain is ATP-dependent Clp protease adapter protein ClpS, found in Bordetella avium (strain 197N).